Reading from the N-terminus, the 279-residue chain is Energy-coupling factor transporter ATP-binding protein EcfA1 (279 aa).

One can recognise an ABC transporter domain in the interval 5-240 (IELKKVTFNY…GDELLQLGLD (236 aa)). 40 to 47 (GHNGSGKS) contacts ATP.

It belongs to the ABC transporter superfamily. Energy-coupling factor EcfA family. Forms a stable energy-coupling factor (ECF) transporter complex composed of 2 membrane-embedded substrate-binding proteins (S component), 2 ATP-binding proteins (A component) and 2 transmembrane proteins (T component).

The protein resides in the cell membrane. Functionally, ATP-binding (A) component of a common energy-coupling factor (ECF) ABC-transporter complex. Unlike classic ABC transporters this ECF transporter provides the energy necessary to transport a number of different substrates. This is Energy-coupling factor transporter ATP-binding protein EcfA1 from Streptococcus pyogenes serotype M5 (strain Manfredo).